The sequence spans 369 residues: 4-hydroxy-3-methylbut-2-en-1-yl diphosphate synthase (flavodoxin) (369 aa).

Residues Cys-270, Cys-273, Cys-305, and Glu-312 each contribute to the [4Fe-4S] cluster site.

The protein belongs to the IspG family. It depends on [4Fe-4S] cluster as a cofactor.

It carries out the reaction (2E)-4-hydroxy-3-methylbut-2-enyl diphosphate + oxidized [flavodoxin] + H2O + 2 H(+) = 2-C-methyl-D-erythritol 2,4-cyclic diphosphate + reduced [flavodoxin]. Its pathway is isoprenoid biosynthesis; isopentenyl diphosphate biosynthesis via DXP pathway; isopentenyl diphosphate from 1-deoxy-D-xylulose 5-phosphate: step 5/6. In terms of biological role, converts 2C-methyl-D-erythritol 2,4-cyclodiphosphate (ME-2,4cPP) into 1-hydroxy-2-methyl-2-(E)-butenyl 4-diphosphate. The polypeptide is 4-hydroxy-3-methylbut-2-en-1-yl diphosphate synthase (flavodoxin) (Pseudomonas fluorescens (strain ATCC BAA-477 / NRRL B-23932 / Pf-5)).